A 580-amino-acid chain; its full sequence is Mucolipin-1 (580 aa).

The tract at residues 1–38 (MATPAGRRASETERLLTPNPGYGTQVGTSPAPTTPTEE) is disordered. Topologically, residues 1–65 (MATPAGRRAS…FRAKGRKPCK (65 aa)) are cytoplasmic. S10 carries the phosphoserine modification. The short motif at 11 to 16 (ETERLL) is the Dileucine motif; mediates targeting to lysosomes element. Residues 42-62 (RRRLKYFFMSPCDKFRAKGRK) are interaction with phosphoinositides. A helical transmembrane segment spans residues 66–86 (LMLQVVKILVVTVQLILFGLS). At 87–298 (NQLVVTFREE…VSRHGDNSFR (212 aa)) the chain is on the extracellular side. Residues 107-121 (LGYSDGSDDTFAAYT) are extracellular/lumenal pore loop. C166 and C192 are oxidised to a cystine. N-linked (GlcNAc...) asparagine glycosylation is found at N220 and N230. C253 and C284 are joined by a disulfide. A helical transmembrane segment spans residues 299–321 (LLFDVVVILTCSLSFLLCARSLL). The Cytoplasmic segment spans residues 322-350 (RGFLLQNEFVVFMWRRRGREISLWERLEF). The chain crosses the membrane as a helical span at residues 351-371 (VNGWYILLVTSDVLTISGTVM). At 372 to 382 (KIGIEAKNLAS) the chain is on the extracellular side. A helical membrane pass occupies residues 383-405 (YDVCSILLGTSTLLVWVGVIRYL). Residues 406-427 (TFFHKYNILIATLRVALPSVMR) lie on the Cytoplasmic side of the membrane. A helical transmembrane segment spans residues 428–448 (FCCCVAVIYLGYCFCGWIVLG). Residues 449–456 (PYHVKFRS) are Extracellular-facing. Positions 457–477 (LSMVSECLFSLINGDDMFVTF) form an intramembrane region, pore-forming. Residues 469–474 (NGDDMF) carry the Selectivity filter motif. At 478-491 (AAMQAQQGHSSLVW) the chain is on the extracellular side. Residues 492–513 (LFSQLYLYSFISLFIYMVLSLF) form a helical membrane-spanning segment. The Cytoplasmic portion of the chain corresponds to 514–580 (IALITGAYDT…SPEDHSLLVN (67 aa)). S557 carries the post-translational modification Phosphoserine. S559 is subject to Phosphoserine; by PAK. Residues 565–567 (CCC) are required for palmitoylation and association with membranes. A Dileucine internalization motif; mediates AP2 complex-dependent internalization motif is present at residues 573 to 578 (EDHSLL).

This sequence belongs to the transient receptor (TC 1.A.4) family. Polycystin subfamily. MCOLN1 sub-subfamily. In terms of assembly, homotetramer. Homooligomer. Can heterooligomerize with MCOLN2 or MCOLN3; heteromeric assemblies have different channel properties as compared to the respective homooligomers and may be tissue-specific. Interacts with PDCD6. Interacts with TMEM163. Interacts with LAPTM4B. Palmitoylated; involved in association with membranes. In terms of processing, phosphorylation by PKA inhibits channel activity. Dephosphorylation increases activity. Post-translationally, proteolytically cleaved probably involving multiple lysosomal proteases including cathepsin B; inhibits lysosomal channel activity. As to expression, widely expressed, with the highest expression in brain, liver and kidney.

Its subcellular location is the late endosome membrane. The protein localises to the lysosome membrane. It localises to the cytoplasmic vesicle membrane. It is found in the cell projection. The protein resides in the phagocytic cup. Its subcellular location is the cytoplasmic vesicle. The protein localises to the phagosome membrane. It localises to the cell membrane. The catalysed reaction is Ca(2+)(in) = Ca(2+)(out). It carries out the reaction Fe(2+)(in) = Fe(2+)(out). The enzyme catalyses Mg(2+)(in) = Mg(2+)(out). It catalyses the reaction K(+)(in) = K(+)(out). The catalysed reaction is Na(+)(in) = Na(+)(out). Its activity is regulated as follows. Channel activity is controlled by multiple regulatory mechanisms in different subcellular compartments. Lower pH by itself has an inhibitory effect on channel conductance. Channel function is transiently modulated by changes in Ca(2+) in a pH-dependent manner; pH changes modify the aggregation state of unitary channels; a negative cooperativity between extracellular/lumenal Ca(2+) and H(+) is suggested. Fe(2+) channel activity is potentiated by low pH. Regulated by phosphoinositides in a compartment-specific manner: in lysosomes activated by PtdIns(3,5)P2 (Phosphatidylinositol 3,5-bisphosphate) and at the plasma membrane inhibited by PtdIns(4,5)P2 (Phosphatidylinositol 4,5-bisphosphate). Nonselective cation channel probably playing a role in the regulation of membrane trafficking events and of metal homeostasis. Acts as a Ca(2+)-permeable cation channel with inwardly rectifying activity. Proposed to play a major role in Ca(2+) release from late endosome and lysosome vesicles to the cytoplasm, which is important for many lysosome-dependent cellular events, including the fusion and trafficking of these organelles, exocytosis and autophagy. Required for efficient uptake of large particles in macrophages in which Ca(2+) release from the lysosomes triggers lysosomal exocytosis. May also play a role in phagosome-lysosome fusion. Involved in lactosylceramide trafficking indicative for a role in the regulation of late endocytic membrane fusion/fission events. By mediating lysosomal Ca(2+) release is involved in regulation of mTORC1 signaling and in mTOR/TFEB-dependent lysosomal adaptation to environmental cues such as nutrient levels. Seems to act as lysosomal active oxygen species (ROS) sensor involved in ROS-induced TFEB activation and autophagy. Also functions as a Fe(2+) permeable channel in late endosomes and lysosomes. Also permeable to Mg(2+), Na(+). K(+) and Cs(+). Proposed to play a role in zinc homeostasis probably implicating its association with TMEM163. In adaptive immunity, TRPML2 and TRPML1 may play redundant roles in the function of the specialized lysosomes of B cells. Functionally, may contribute to cellular lipase activity within the late endosomal pathway or at the cell surface which may be involved in processes of membrane reshaping and vesiculation, especially the growth of tubular structures. However, it is not known, whether it conveys the enzymatic activity directly, or merely facilitates the activity of an associated phospholipase. The polypeptide is Mucolipin-1 (Mus musculus (Mouse)).